The primary structure comprises 351 residues: Glycerol-1-phosphate dehydrogenase [NAD(P)+] (351 aa).

Residues 98–102 (GSIID) and 120–123 (TTAS) each bind NAD(+). Position 125 (aspartate 125) interacts with substrate. Serine 129 lines the NAD(+) pocket. Substrate is bound at residue aspartate 172. The Zn(2+) site is built by aspartate 172 and histidine 252. Histidine 256 is a binding site for substrate. Histidine 268 is a binding site for Zn(2+).

The protein belongs to the glycerol-1-phosphate dehydrogenase family. Zn(2+) is required as a cofactor.

The protein resides in the cytoplasm. The catalysed reaction is sn-glycerol 1-phosphate + NAD(+) = dihydroxyacetone phosphate + NADH + H(+). It catalyses the reaction sn-glycerol 1-phosphate + NADP(+) = dihydroxyacetone phosphate + NADPH + H(+). It functions in the pathway membrane lipid metabolism; glycerophospholipid metabolism. Catalyzes the NAD(P)H-dependent reduction of dihydroxyacetonephosphate (DHAP or glycerone phosphate) to glycerol 1-phosphate (G1P). The G1P thus generated is used as the glycerophosphate backbone of phospholipids in the cellular membranes of Archaea. The protein is Glycerol-1-phosphate dehydrogenase [NAD(P)+] of Thermococcus kodakarensis (strain ATCC BAA-918 / JCM 12380 / KOD1) (Pyrococcus kodakaraensis (strain KOD1)).